The primary structure comprises 164 residues: Flavodoxin (164 aa).

In terms of domain architecture, Flavodoxin-like spans I4 to K160.

It belongs to the flavodoxin family. The cofactor is FMN.

Its function is as follows. Low-potential electron donor to a number of redox enzymes. The polypeptide is Flavodoxin (fldA) (Helicobacter pylori (strain ATCC 700392 / 26695) (Campylobacter pylori)).